Reading from the N-terminus, the 178-residue chain is SsrA-binding protein (178 aa).

The segment at 1 to 28 (MAKKSTPVDSGRSKGKKASAPRGGGPAV) is disordered.

It belongs to the SmpB family.

Its subcellular location is the cytoplasm. Required for rescue of stalled ribosomes mediated by trans-translation. Binds to transfer-messenger RNA (tmRNA), required for stable association of tmRNA with ribosomes. tmRNA and SmpB together mimic tRNA shape, replacing the anticodon stem-loop with SmpB. tmRNA is encoded by the ssrA gene; the 2 termini fold to resemble tRNA(Ala) and it encodes a 'tag peptide', a short internal open reading frame. During trans-translation Ala-aminoacylated tmRNA acts like a tRNA, entering the A-site of stalled ribosomes, displacing the stalled mRNA. The ribosome then switches to translate the ORF on the tmRNA; the nascent peptide is terminated with the 'tag peptide' encoded by the tmRNA and targeted for degradation. The ribosome is freed to recommence translation, which seems to be the essential function of trans-translation. This chain is SsrA-binding protein, found in Corynebacterium urealyticum (strain ATCC 43042 / DSM 7109).